A 277-amino-acid polypeptide reads, in one-letter code: Large ribosomal subunit protein uL2 (277 aa).

Disordered regions lie at residues 35-58 (QPLP…GGGH) and 213-277 (WKGI…RKRK).

This sequence belongs to the universal ribosomal protein uL2 family. Part of the 50S ribosomal subunit. Forms a bridge to the 30S subunit in the 70S ribosome.

Its function is as follows. One of the primary rRNA binding proteins. Required for association of the 30S and 50S subunits to form the 70S ribosome, for tRNA binding and peptide bond formation. It has been suggested to have peptidyltransferase activity; this is somewhat controversial. Makes several contacts with the 16S rRNA in the 70S ribosome. In Staphylococcus carnosus (strain TM300), this protein is Large ribosomal subunit protein uL2.